The chain runs to 408 residues: GTPase Obg (408 aa).

The 159-residue stretch at 1-159 folds into the Obg domain; the sequence is MKFVDEVSIR…RDLKMEMKVL (159 aa). Residues 127 to 148 form a disordered region; it reads NTRFKSSTNRAPRQTTPGKPGE. The span at 129–143 shows a compositional bias: polar residues; sequence RFKSSTNRAPRQTTP. Residues 160–333 form the OBG-type G domain; it reads ADVGLLGLPN…LSHDLMRYLE (174 aa). GTP-binding positions include 166 to 173, 191 to 195, 213 to 216, 283 to 286, and 314 to 316; these read GLPNAGKS, FTTLV, DIPG, NKAD, and SAI. The Mg(2+) site is built by S173 and T193. Residues 385–401 are compositionally biased toward acidic residues; the sequence is GDDDGWDDDFEDDEDGP. The interval 385–408 is disordered; that stretch reads GDDDGWDDDFEDDEDGPEIIYVRD.

This sequence belongs to the TRAFAC class OBG-HflX-like GTPase superfamily. OBG GTPase family. As to quaternary structure, monomer. Mg(2+) serves as cofactor.

It is found in the cytoplasm. Functionally, an essential GTPase which binds GTP, GDP and possibly (p)ppGpp with moderate affinity, with high nucleotide exchange rates and a fairly low GTP hydrolysis rate. Plays a role in control of the cell cycle, stress response, ribosome biogenesis and in those bacteria that undergo differentiation, in morphogenesis control. The sequence is that of GTPase Obg from Pseudomonas putida (strain ATCC 700007 / DSM 6899 / JCM 31910 / BCRC 17059 / LMG 24140 / F1).